Consider the following 433-residue polypeptide: Serine hydroxymethyltransferase (433 aa).

Residues L121 and 125 to 127 (GHI) contribute to the (6S)-5,6,7,8-tetrahydrofolate site. K231 carries the N6-(pyridoxal phosphate)lysine modification.

The protein belongs to the SHMT family. Homodimer. It depends on pyridoxal 5'-phosphate as a cofactor.

It is found in the cytoplasm. Its pathway is amino-acid biosynthesis; glycine biosynthesis; glycine from L-serine: step 1/1. In terms of biological role, catalyzes the reversible interconversion of serine and glycine with a modified folate serving as the one-carbon carrier. Also exhibits a pteridine-independent aldolase activity toward beta-hydroxyamino acids, producing glycine and aldehydes, via a retro-aldol mechanism. This chain is Serine hydroxymethyltransferase, found in Picrophilus torridus (strain ATCC 700027 / DSM 9790 / JCM 10055 / NBRC 100828 / KAW 2/3).